A 147-amino-acid polypeptide reads, in one-letter code: Hemoglobin subunit beta (147 aa).

In terms of domain architecture, Globin spans Glu3–His147. Positions 64 and 93 each coordinate heme b.

The protein belongs to the globin family. Hb1 is a heterotetramer of two alpha chains and two beta chains. In terms of tissue distribution, red blood cells.

In terms of biological role, involved in oxygen transport from gills to the various peripheral tissues. This Trematomus bernacchii (Emerald rockcod) protein is Hemoglobin subunit beta (hbb).